The chain runs to 122 residues: NADH-quinone oxidoreductase subunit A (122 aa).

3 helical membrane passes run Ile-12–Ile-32, Leu-66–Ile-86, and Ile-91–Ile-111.

This sequence belongs to the complex I subunit 3 family. As to quaternary structure, NDH-1 is composed of 14 different subunits. Subunits NuoA, H, J, K, L, M, N constitute the membrane sector of the complex.

The protein resides in the cell inner membrane. The enzyme catalyses a quinone + NADH + 5 H(+)(in) = a quinol + NAD(+) + 4 H(+)(out). Its function is as follows. NDH-1 shuttles electrons from NADH, via FMN and iron-sulfur (Fe-S) centers, to quinones in the respiratory chain. The immediate electron acceptor for the enzyme in this species is believed to be ubiquinone. Couples the redox reaction to proton translocation (for every two electrons transferred, four hydrogen ions are translocated across the cytoplasmic membrane), and thus conserves the redox energy in a proton gradient. In Pelagibacter ubique (strain HTCC1062), this protein is NADH-quinone oxidoreductase subunit A.